A 154-amino-acid polypeptide reads, in one-letter code: Large ribosomal subunit protein uL15 (154 aa).

Residues 1-54 (MKLHDLTPAPGSRKPKKRVGRGPGGTDKTAGRGHKGQKSRSGAGKGPFFEGGRS) form a disordered region.

Belongs to the universal ribosomal protein uL15 family. As to quaternary structure, part of the 50S ribosomal subunit.

Functionally, binds to the 23S rRNA. This Deinococcus geothermalis (strain DSM 11300 / CIP 105573 / AG-3a) protein is Large ribosomal subunit protein uL15.